Consider the following 824-residue polypeptide: Leucine--tRNA ligase (824 aa).

A 'HIGH' region motif is present at residues 42-52 (PYPSGHLHMGH). A 'KMSKS' region motif is present at residues 581–585 (KMSKS). Residue lysine 584 participates in ATP binding.

The protein belongs to the class-I aminoacyl-tRNA synthetase family.

The protein resides in the cytoplasm. The catalysed reaction is tRNA(Leu) + L-leucine + ATP = L-leucyl-tRNA(Leu) + AMP + diphosphate. The sequence is that of Leucine--tRNA ligase from Syntrophomonas wolfei subsp. wolfei (strain DSM 2245B / Goettingen).